We begin with the raw amino-acid sequence, 389 residues long: Trans-2-enoyl-CoA reductase [NADH] (389 aa).

NAD(+) contacts are provided by residues 47 to 52, 73 to 74, 110 to 111, and 138 to 139; these read GASTGY, FE, DA, and LA. A substrate-binding site is contributed by tyrosine 224. The Proton donor role is filled by tyrosine 234. NAD(+) contacts are provided by residues lysine 243 and 272–274; that span reads LVT.

The protein belongs to the TER reductase family. As to quaternary structure, monomer.

The enzyme catalyses a 2,3-saturated acyl-CoA + NAD(+) = a (2E)-enoyl-CoA + NADH + H(+). The protein operates within lipid metabolism; fatty acid biosynthesis. Functionally, involved in the fatty acid synthesis (FAS II). Catalyzes the reduction of a carbon-carbon double bond in an enoyl moiety that is covalently linked to a coenzyme A (CoA). The protein is Trans-2-enoyl-CoA reductase [NADH] of Clostridium perfringens (strain 13 / Type A).